The sequence spans 347 residues: Protein RecA (347 aa).

65–72 (GPESSGKT) is an ATP binding site.

Belongs to the RecA family.

The protein resides in the cytoplasm. Functionally, can catalyze the hydrolysis of ATP in the presence of single-stranded DNA, the ATP-dependent uptake of single-stranded DNA by duplex DNA, and the ATP-dependent hybridization of homologous single-stranded DNAs. It interacts with LexA causing its activation and leading to its autocatalytic cleavage. The polypeptide is Protein RecA (Marinobacter nauticus (strain ATCC 700491 / DSM 11845 / VT8) (Marinobacter aquaeolei)).